The sequence spans 91 residues: Non-specific lipid-transfer protein 1 (91 aa).

4 cysteine pairs are disulfide-bonded: cysteine 4-cysteine 51, cysteine 14-cysteine 28, cysteine 29-cysteine 74, and cysteine 49-cysteine 88.

As to expression, detected in seeds (at protein level).

Plant non-specific lipid-transfer proteins transfer phospholipids as well as galactolipids across membranes. May play a role in wax or cutin deposition in the cell walls of expanding epidermal cells and certain secretory tissues. In Trachyspermum ammi (Ajowan caraway), this protein is Non-specific lipid-transfer protein 1.